The chain runs to 90 residues: Acylphosphatase (90 aa).

The region spanning 3-90 (NYKIIVFGTV…KTYNDFSVTY (88 aa)) is the Acylphosphatase-like domain. Active-site residues include Arg-18 and Asn-36.

It belongs to the acylphosphatase family.

It catalyses the reaction an acyl phosphate + H2O = a carboxylate + phosphate + H(+). The protein is Acylphosphatase (acyP) of Ligilactobacillus salivarius (strain UCC118) (Lactobacillus salivarius).